The sequence spans 580 residues: Arginine--tRNA ligase (580 aa).

The short motif at 131–141 (ANPTGPMHVGH) is the 'HIGH' region element.

Belongs to the class-I aminoacyl-tRNA synthetase family. As to quaternary structure, monomer.

Its subcellular location is the cytoplasm. It carries out the reaction tRNA(Arg) + L-arginine + ATP = L-arginyl-tRNA(Arg) + AMP + diphosphate. In Cereibacter sphaeroides (strain ATCC 17029 / ATH 2.4.9) (Rhodobacter sphaeroides), this protein is Arginine--tRNA ligase.